Consider the following 337-residue polypeptide: tRNA N6-adenosine threonylcarbamoyltransferase (337 aa).

Residues histidine 111 and histidine 115 each contribute to the Fe cation site. Residues 134–138 (LVSGG), aspartate 167, glycine 180, and asparagine 272 each bind substrate. Aspartate 300 provides a ligand contact to Fe cation.

Belongs to the KAE1 / TsaD family. Requires Fe(2+) as cofactor.

It is found in the cytoplasm. It carries out the reaction L-threonylcarbamoyladenylate + adenosine(37) in tRNA = N(6)-L-threonylcarbamoyladenosine(37) in tRNA + AMP + H(+). Required for the formation of a threonylcarbamoyl group on adenosine at position 37 (t(6)A37) in tRNAs that read codons beginning with adenine. Is involved in the transfer of the threonylcarbamoyl moiety of threonylcarbamoyl-AMP (TC-AMP) to the N6 group of A37, together with TsaE and TsaB. TsaD likely plays a direct catalytic role in this reaction. The chain is tRNA N6-adenosine threonylcarbamoyltransferase from Salmonella typhi.